The chain runs to 186 residues: Alkyl hydroperoxide reductase AhpD (186 aa).

Residue cysteine 132 is the Proton donor of the active site. Residues cysteine 132 and cysteine 135 are joined by a disulfide bond. The Cysteine sulfenic acid (-SOH) intermediate role is filled by cysteine 135.

This sequence belongs to the AhpD family.

It carries out the reaction N(6)-[(R)-dihydrolipoyl]-L-lysyl-[lipoyl-carrier protein] + a hydroperoxide = N(6)-[(R)-lipoyl]-L-lysyl-[lipoyl-carrier protein] + an alcohol + H2O. In terms of biological role, antioxidant protein with alkyl hydroperoxidase activity. Required for the reduction of the AhpC active site cysteine residues and for the regeneration of the AhpC enzyme activity. The sequence is that of Alkyl hydroperoxide reductase AhpD from Anaeromyxobacter sp. (strain K).